A 444-amino-acid chain; its full sequence is Exodeoxyribonuclease 7 large subunit (444 aa).

It belongs to the XseA family. As to quaternary structure, heterooligomer composed of large and small subunits.

The protein resides in the cytoplasm. The catalysed reaction is Exonucleolytic cleavage in either 5'- to 3'- or 3'- to 5'-direction to yield nucleoside 5'-phosphates.. In terms of biological role, bidirectionally degrades single-stranded DNA into large acid-insoluble oligonucleotides, which are then degraded further into small acid-soluble oligonucleotides. The sequence is that of Exodeoxyribonuclease 7 large subunit from Rickettsia conorii (strain ATCC VR-613 / Malish 7).